The sequence spans 261 residues: Thiazole synthase (261 aa).

Catalysis depends on Lys102, which acts as the Schiff-base intermediate with DXP. 1-deoxy-D-xylulose 5-phosphate is bound by residues Gly163, 189 to 190 (AG), and 211 to 212 (NT).

This sequence belongs to the ThiG family. In terms of assembly, homotetramer. Forms heterodimers with either ThiH or ThiS.

The protein resides in the cytoplasm. It catalyses the reaction [ThiS sulfur-carrier protein]-C-terminal-Gly-aminoethanethioate + 2-iminoacetate + 1-deoxy-D-xylulose 5-phosphate = [ThiS sulfur-carrier protein]-C-terminal Gly-Gly + 2-[(2R,5Z)-2-carboxy-4-methylthiazol-5(2H)-ylidene]ethyl phosphate + 2 H2O + H(+). It functions in the pathway cofactor biosynthesis; thiamine diphosphate biosynthesis. Functionally, catalyzes the rearrangement of 1-deoxy-D-xylulose 5-phosphate (DXP) to produce the thiazole phosphate moiety of thiamine. Sulfur is provided by the thiocarboxylate moiety of the carrier protein ThiS. In vitro, sulfur can be provided by H(2)S. The polypeptide is Thiazole synthase (Acinetobacter baumannii (strain SDF)).